A 181-amino-acid chain; its full sequence is Mating-type protein A1 (181 aa).

Residues aspartate 122–alanine 181 constitute a DNA-binding region (homeobox).

Belongs to the MATA1 family.

The protein resides in the nucleus. Functionally, mating type proteins are sequence specific DNA-binding proteins that act as master switches in yeast differentiation by controlling gene expression in a cell type-specific fashion. This chain is Mating-type protein A1 (MATA1), found in Pichia angusta (Yeast).